Reading from the N-terminus, the 159-residue chain is Ribosome maturation factor RimP (159 aa).

This sequence belongs to the RimP family.

It localises to the cytoplasm. Its function is as follows. Required for maturation of 30S ribosomal subunits. The polypeptide is Ribosome maturation factor RimP (Halothermothrix orenii (strain H 168 / OCM 544 / DSM 9562)).